The primary structure comprises 342 residues: Holliday junction branch migration complex subunit RuvB (342 aa).

Positions 1 to 181 are large ATPase domain (RuvB-L); it reads MEERFLTPKD…FGMVLELEFY (181 aa). Residues Leu20, Arg21, Gly62, Lys65, Thr66, Thr67, 128–130, Arg171, Tyr181, and Arg218 contribute to the ATP site; that span reads EDF. Position 66 (Thr66) interacts with Mg(2+). Residues 182 to 252 are small ATPAse domain (RuvB-S); sequence TPDELKQIIK…TVEDAMKIMG (71 aa). The head domain (RuvB-H) stretch occupies residues 255–342; it reads AEGLDDMDRK…IGPLWDSTGD (88 aa). 2 residues coordinate DNA: Arg310 and Arg315.

Belongs to the RuvB family. As to quaternary structure, homohexamer. Forms an RuvA(8)-RuvB(12)-Holliday junction (HJ) complex. HJ DNA is sandwiched between 2 RuvA tetramers; dsDNA enters through RuvA and exits via RuvB. An RuvB hexamer assembles on each DNA strand where it exits the tetramer. Each RuvB hexamer is contacted by two RuvA subunits (via domain III) on 2 adjacent RuvB subunits; this complex drives branch migration. In the full resolvosome a probable DNA-RuvA(4)-RuvB(12)-RuvC(2) complex forms which resolves the HJ.

The protein localises to the cytoplasm. It catalyses the reaction ATP + H2O = ADP + phosphate + H(+). Its function is as follows. The RuvA-RuvB-RuvC complex processes Holliday junction (HJ) DNA during genetic recombination and DNA repair, while the RuvA-RuvB complex plays an important role in the rescue of blocked DNA replication forks via replication fork reversal (RFR). RuvA specifically binds to HJ cruciform DNA, conferring on it an open structure. The RuvB hexamer acts as an ATP-dependent pump, pulling dsDNA into and through the RuvAB complex. RuvB forms 2 homohexamers on either side of HJ DNA bound by 1 or 2 RuvA tetramers; 4 subunits per hexamer contact DNA at a time. Coordinated motions by a converter formed by DNA-disengaged RuvB subunits stimulates ATP hydrolysis and nucleotide exchange. Immobilization of the converter enables RuvB to convert the ATP-contained energy into a lever motion, pulling 2 nucleotides of DNA out of the RuvA tetramer per ATP hydrolyzed, thus driving DNA branch migration. The RuvB motors rotate together with the DNA substrate, which together with the progressing nucleotide cycle form the mechanistic basis for DNA recombination by continuous HJ branch migration. Branch migration allows RuvC to scan DNA until it finds its consensus sequence, where it cleaves and resolves cruciform DNA. The sequence is that of Holliday junction branch migration complex subunit RuvB from Kosmotoga olearia (strain ATCC BAA-1733 / DSM 21960 / TBF 19.5.1).